The sequence spans 156 residues: Small ribosomal subunit protein uS7 (156 aa).

The protein belongs to the universal ribosomal protein uS7 family. As to quaternary structure, part of the 30S ribosomal subunit. Contacts proteins S9 and S11.

In terms of biological role, one of the primary rRNA binding proteins, it binds directly to 16S rRNA where it nucleates assembly of the head domain of the 30S subunit. Is located at the subunit interface close to the decoding center, probably blocks exit of the E-site tRNA. The polypeptide is Small ribosomal subunit protein uS7 (Halalkalibacterium halodurans (strain ATCC BAA-125 / DSM 18197 / FERM 7344 / JCM 9153 / C-125) (Bacillus halodurans)).